The chain runs to 473 residues: Photosystem II CP43 reaction center protein (473 aa).

Positions 1–14 (MKTLYSLRRFYHVE) are excised as a propeptide. N-acetylthreonine is present on Thr-15. Thr-15 carries the phosphothreonine modification. 5 helical membrane-spanning segments follow: residues 69 to 93 (LFEV…PHLA), 134 to 155 (LLGP…KDRN), 178 to 200 (KALF…RKIT), 255 to 275 (KPFA…LSYS), and 291 to 312 (WFNN…ASQA). Glu-367 contributes to the [CaMn4O5] cluster binding site. The helical transmembrane segment at 447–471 (RARAAAAGFEKGIDRDFEPVLSMTP) threads the bilayer.

It belongs to the PsbB/PsbC family. PsbC subfamily. In terms of assembly, PSII is composed of 1 copy each of membrane proteins PsbA, PsbB, PsbC, PsbD, PsbE, PsbF, PsbH, PsbI, PsbJ, PsbK, PsbL, PsbM, PsbT, PsbX, PsbY, PsbZ, Psb30/Ycf12, at least 3 peripheral proteins of the oxygen-evolving complex and a large number of cofactors. It forms dimeric complexes. Binds multiple chlorophylls and provides some of the ligands for the Ca-4Mn-5O cluster of the oxygen-evolving complex. It may also provide a ligand for a Cl- that is required for oxygen evolution. PSII binds additional chlorophylls, carotenoids and specific lipids. is required as a cofactor.

It localises to the plastid. Its subcellular location is the chloroplast thylakoid membrane. In terms of biological role, one of the components of the core complex of photosystem II (PSII). It binds chlorophyll and helps catalyze the primary light-induced photochemical processes of PSII. PSII is a light-driven water:plastoquinone oxidoreductase, using light energy to abstract electrons from H(2)O, generating O(2) and a proton gradient subsequently used for ATP formation. The sequence is that of Photosystem II CP43 reaction center protein from Fagopyrum esculentum subsp. ancestrale (Wild buckwheat).